The chain runs to 150 residues: 3-dehydroquinate dehydratase (150 aa).

Residue tyrosine 22 is the Proton acceptor of the active site. Asparagine 73, histidine 79, and aspartate 86 together coordinate substrate. The active-site Proton donor is the histidine 99. Substrate is bound by residues 100–101 and arginine 110; that span reads LS.

It belongs to the type-II 3-dehydroquinase family. As to quaternary structure, homododecamer.

The enzyme catalyses 3-dehydroquinate = 3-dehydroshikimate + H2O. The protein operates within metabolic intermediate biosynthesis; chorismate biosynthesis; chorismate from D-erythrose 4-phosphate and phosphoenolpyruvate: step 3/7. Its function is as follows. Catalyzes a trans-dehydration via an enolate intermediate. This chain is 3-dehydroquinate dehydratase, found in Dinoroseobacter shibae (strain DSM 16493 / NCIMB 14021 / DFL 12).